A 1816-amino-acid polypeptide reads, in one-letter code: uncharacterized protein (1816 aa).

Disordered regions lie at residues 338–357 (DSSS…NNNN) and 562–605 (ELEK…IKPK). Positions 339–357 (SSSSSSNNNNNNNNNNNNN) are enriched in low complexity. Residues 562 to 577 (ELEKERIKKEKEDSKK) are compositionally biased toward basic and acidic residues. Low complexity predominate over residues 581 to 603 (KQSSSSSSSSTTTTSTTTSSTIK). One can recognise a Helicase ATP-binding domain in the interval 826 to 999 (LDIVDKRESA…FLKKIDPNRK (174 aa)). Residue 839-846 (ASTSSGKT) participates in ATP binding. The DEAH box signature appears at 949–952 (DEVH). Residues 1198–1379 (QLDLVIERFQ…SVVSPSLCLS (182 aa)) form the Helicase C-terminal domain. Positions 1388-1487 (TNGSANKSNE…TTTKTPTTTS (100 aa)) are disordered. Positions 1395–1427 (SNEENKVQVKENEKEREKEKEKEKEKEKEKETI) are enriched in basic and acidic residues. Over residues 1445–1454 (NWDDDEEETA) the composition is skewed to acidic residues. Positions 1456 to 1487 (STKTTPATTPTTTTTENTPATTTTTKTPTTTS) are enriched in low complexity.

The protein belongs to the helicase family. SKI2 subfamily.

The protein localises to the nucleus. This is an uncharacterized protein from Dictyostelium discoideum (Social amoeba).